The chain runs to 403 residues: RUN domain-containing protein 3B (403 aa).

The tract at residues 1–20 (MASRSLGGLSGSRGGGKKSL) is disordered. An Omega-N-methylarginine modification is found at Arg13. An RUN domain is found at 53–185 (DDSSPEFNNF…IDFSFCLKGE (133 aa)). Positions 207 to 232 (SDSISSDEEELRTFGSSDSEGSTPEN) are disordered. Ser211 and Ser212 each carry phosphoserine. The span at 220-231 (FGSSDSEGSTPE) shows a compositional bias: polar residues. Positions 296–321 (AHKLEKEQLEYIIVELQDQLKSYQSL) form a coiled coil.

Belongs to the RUNDC3 family. As to quaternary structure, interacts with RAP2A.

The protein is RUN domain-containing protein 3B (Rundc3b) of Rattus norvegicus (Rat).